The primary structure comprises 271 residues: Formamidopyrimidine-DNA glycosylase (271 aa).

The active-site Schiff-base intermediate with DNA is P2. E3 functions as the Proton donor in the catalytic mechanism. K58 functions as the Proton donor; for beta-elimination activity in the catalytic mechanism. 3 residues coordinate DNA: H92, R111, and R152. Residues F237–G271 form an FPG-type zinc finger. The Proton donor; for delta-elimination activity role is filled by R261.

The protein belongs to the FPG family. As to quaternary structure, monomer. Zn(2+) serves as cofactor.

The enzyme catalyses Hydrolysis of DNA containing ring-opened 7-methylguanine residues, releasing 2,6-diamino-4-hydroxy-5-(N-methyl)formamidopyrimidine.. It catalyses the reaction 2'-deoxyribonucleotide-(2'-deoxyribose 5'-phosphate)-2'-deoxyribonucleotide-DNA = a 3'-end 2'-deoxyribonucleotide-(2,3-dehydro-2,3-deoxyribose 5'-phosphate)-DNA + a 5'-end 5'-phospho-2'-deoxyribonucleoside-DNA + H(+). Functionally, involved in base excision repair of DNA damaged by oxidation or by mutagenic agents. Acts as a DNA glycosylase that recognizes and removes damaged bases. Has a preference for oxidized purines, such as 7,8-dihydro-8-oxoguanine (8-oxoG). Has AP (apurinic/apyrimidinic) lyase activity and introduces nicks in the DNA strand. Cleaves the DNA backbone by beta-delta elimination to generate a single-strand break at the site of the removed base with both 3'- and 5'-phosphates. The polypeptide is Formamidopyrimidine-DNA glycosylase (mutM1) (Xylella fastidiosa (strain 9a5c)).